Reading from the N-terminus, the 1020-residue chain is Vacuolar membrane protease (1020 aa).

Residues 1–11 are Cytoplasmic-facing; sequence MKCHNPFGFRV. The chain crosses the membrane as a helical span at residues 12 to 32; sequence GPVTFWTIIIYLALLVPLLWI. At 33-410 the chain is on the vacuolar side; it reads HETVPPAPSS…GFAVFGLRGL (378 aa). N-linked (GlcNAc...) asparagine glycans are attached at residues asparagine 50, asparagine 94, and asparagine 130. Residues histidine 191 and aspartate 203 each coordinate Zn(2+). Glutamate 237 serves as the catalytic Proton acceptor. Residues glutamate 238, glutamate 263, and histidine 336 each contribute to the Zn(2+) site. Residues 411–431 form a helical membrane-spanning segment; that stretch reads FAWSLTLLIVSPLILAILVFI. Residues 432-467 are Cytoplasmic-facing; sequence LNRHDKLYFFSRKINVHNEGSEDPVSIGGFRGFTRF. Residues 468–488 form a helical membrane-spanning segment; the sequence is PIAVGFSGALTLASAFLLTKI. The Vacuolar portion of the chain corresponds to 489 to 491; the sequence is NPM. Residues 492-512 form a helical membrane-spanning segment; that stretch reads IVYSSEYAVWGMMLSLFYVSL. At 513–529 the chain is on the cytoplasmic side; it reads WMTLKGSSAVRPSALQR. The chain crosses the membrane as a helical span at residues 530-550; that stretch reads GYIHIWLFIVSWGLLIVVAVT. The Vacuolar portion of the chain corresponds to 551–561; that stretch reads EDRLKIASGYP. The helical transmembrane segment at 562–582 threads the bilayer; sequence VVFLHSALFLSTVISFLELFG. Over 583–690 the chain is Cytoplasmic; it reads LTKKHDYARR…RLPGWTWILQ (108 aa). A disordered region spans residues 609–648; sequence DDALIAPDTPNDEAEDSDGEDSEHEPTETTPLRAGGDSRV. Positions 618–631 are enriched in acidic residues; that stretch reads PNDEAEDSDGEDSE. The helical transmembrane segment at 691-711 threads the bilayer; that stretch reads FLLLAPINVILWGQIGLFAVA. At 712–724 the chain is on the vacuolar side; it reads ATQAGGADGGSVL. Residues 725 to 745 form a helical membrane-spanning segment; sequence TTYLIIAVLSIVILVPLAPFI. At 746–750 the chain is on the cytoplasmic side; that stretch reads HRVHY. Residues 751 to 771 form a helical membrane-spanning segment; sequence YVPIILFAAFAGTLIYNLIAF. The Vacuolar segment spans residues 772 to 1020; that stretch reads PFSANNRYKI…VGLVRPVKRF (249 aa). N-linked (GlcNAc...) asparagine glycosylation is found at asparagine 851, asparagine 868, and asparagine 873.

Belongs to the peptidase M28 family. Zn(2+) is required as a cofactor.

It is found in the vacuole membrane. Functionally, may be involved in vacuolar sorting and osmoregulation. This chain is Vacuolar membrane protease, found in Verticillium alfalfae (strain VaMs.102 / ATCC MYA-4576 / FGSC 10136) (Verticillium wilt of alfalfa).